Consider the following 199-residue polypeptide: 5'-deoxynucleotidase YfbR (199 aa).

Residues 18-19 and His33 contribute to the substrate site; that span reads RW. The 113-residue stretch at 30-142 folds into the HD domain; the sequence is VSEHSLQVAM…VKQADALCAY (113 aa). Residues His33, His68, and Asp69 each contribute to the a divalent metal cation site. Substrate is bound by residues Asp69, 77 to 80, and Asp137; that span reads DLPT. Asp137 is an a divalent metal cation binding site.

This sequence belongs to the 5DNU family. In terms of assembly, homodimer. Requires a divalent metal cation as cofactor.

It localises to the cytoplasm. It catalyses the reaction a 2'-deoxyribonucleoside 5'-phosphate + H2O = a 2'-deoxyribonucleoside + phosphate. Functionally, catalyzes the strictly specific dephosphorylation of 2'-deoxyribonucleoside 5'-monophosphates. This is 5'-deoxynucleotidase YfbR from Shigella flexneri serotype 5b (strain 8401).